Reading from the N-terminus, the 274-residue chain is MGYVVSTFYRFVHLSNYYDIQSVLKEFCVQHDIKGTIILAEQGINATIAGAQSALNQFFSFLDLDNRLKDIQHHESFSTHNPFSKMKVKLRNELVRLGIENFDNSVCGEYVSPQNWDDLISRSDVYTIDTRNTYEINFGKFKNAINPQTKCFRDFPEWAVSWASDKVNQDPIIAMYCTGGIRCEKSTAFMKNLGFNKVYHLKGGILEYFKSTKNTNNLWEGDCFTFDDRIVVDDNLVPGRVKCVSCDVHVTREEMKSVTRGNVLCFNCREVAKV.

The 97-residue stretch at Ser121–Asn217 folds into the Rhodanese domain. Cys177 (cysteine persulfide intermediate) is an active-site residue.

Belongs to the TrhO family.

It carries out the reaction uridine(34) in tRNA + AH2 + O2 = 5-hydroxyuridine(34) in tRNA + A + H2O. In terms of biological role, catalyzes oxygen-dependent 5-hydroxyuridine (ho5U) modification at position 34 in tRNAs. The polypeptide is tRNA uridine(34) hydroxylase (Ehrlichia canis (strain Jake)).